Reading from the N-terminus, the 326-residue chain is Tetraacyldisaccharide 4'-kinase (326 aa).

Residue 55–62 (TAGGNGKT) coordinates ATP.

This sequence belongs to the LpxK family.

The enzyme catalyses a lipid A disaccharide + ATP = a lipid IVA + ADP + H(+). Its pathway is glycolipid biosynthesis; lipid IV(A) biosynthesis; lipid IV(A) from (3R)-3-hydroxytetradecanoyl-[acyl-carrier-protein] and UDP-N-acetyl-alpha-D-glucosamine: step 6/6. Its function is as follows. Transfers the gamma-phosphate of ATP to the 4'-position of a tetraacyldisaccharide 1-phosphate intermediate (termed DS-1-P) to form tetraacyldisaccharide 1,4'-bis-phosphate (lipid IVA). The sequence is that of Tetraacyldisaccharide 4'-kinase from Klebsiella pneumoniae subsp. pneumoniae (strain ATCC 700721 / MGH 78578).